The following is a 1196-amino-acid chain: Calcium-activated potassium channel subunit alpha-1 (1196 aa).

The Extracellular segment spans residues 1–52 (MATWNASQIILNSMSNIIESPQSKPRPVMASNGASLFIPVTMEVPCDQGTRM). A helical membrane pass occupies residues 53–73 (WWAFLASSMVTFFGGLFIILV). Over 74–146 (WRTFKYLWTV…MISAQTLTGR (73 aa)) the chain is Cytoplasmic. The helical transmembrane segment at 147–167 (VLVVTVFALSIGALMIYFIDS) threads the bilayer. Topologically, residues 168-182 (SNPIESCQNFYKDFT) are extracellular. The helical transmembrane segment at 183 to 203 (LQIDMAFNIFFLLYFGLRFIA) threads the bilayer. The Cytoplasmic segment spans residues 204–207 (ANDK). Residues 208–228 (LWFWLEVNSVVDFFTVPPVFV) form a helical membrane-spanning segment. Residues 229–232 (SVYL) lie on the Extracellular side of the membrane. The chain crosses the membrane as a helical; Voltage-sensor span at residues 233–253 (NRSWLGLRFLRALRLIQFSEI). Residues 254-268 (LQFLNILKTSNSIKL) lie on the Cytoplasmic side of the membrane. The chain crosses the membrane as a helical span at residues 269 to 289 (VNLCSIFISTWLTAAGFIHLV). At 290–303 (ENSGDPWRNFENSQ) the chain is on the extracellular side. The pore-forming intramembrane region spans 304 to 326 (DLSYWECMYLLMVTMSTVGYGDV). A Selectivity for potassium motif is present at residues 320–323 (TVGY). Residues 327–335 (YAKTTLGRL) are Extracellular-facing. The chain crosses the membrane as a helical span at residues 336–356 (FMVFFILGGLAMFASYVPEII). At 357–1196 (ELIGNRKKYG…PPIREVEDEC (840 aa)) the chain is on the cytoplasmic side. The RCK N-terminal 1 domain occupies 375 to 517 (RKHIVVCGHI…WNWKDGDDAI (143 aa)). Mg(2+) is bound by residues glutamate 407, glutamine 430, and glutamate 432. The segment S7 stretch occupies residues 524-544 (LGFIAQSCLAQGLSTMLANLF). The tract at residues 581–601 (LSFPAVCELCFVKLKLLMIAI) is segment S8. The interval 645 to 649 (CKACH) is heme-binding motif. The disordered stretch occupies residues 672–697 (SALSPKKKQRNGGMRHSPNTSPNMMR). The tract at residues 748–768 (VLSGHVVVCIFGDMTSALIGV) is segment S9. The region spanning 750 to 894 (SGHVVVCIFG…MERSSPDNSP (145 aa)) is the RCK N-terminal 2 domain. The short motif at 914–936 (TELVNDSNVQFLDQDDDDDPDTE) is the Calcium bowl element. Ca(2+)-binding residues include glutamine 923, aspartate 926, aspartate 929, and aspartate 931. The interval 943 to 963 (FACGTAFAVSVLDSLMSATYF) is segment S10. Low complexity predominate over residues 1098-1119 (ASLSHSSHSSHSSSKKSSSVTS). The segment at 1098–1149 (ASLSHSSHSSHSSSKKSSSVTSILHTASANRQNRVKARDSRDKQKMGQAEKK) is disordered. The segment covering 1120 to 1129 (ILHTASANRQ) has biased composition (polar residues). A compositionally biased stretch (basic and acidic residues) spans 1133–1149 (KARDSRDKQKMGQAEKK).

Belongs to the potassium channel family. Calcium-activated (TC 1.A.1.3) subfamily. KCa1.1/KCNMA1 sub-subfamily. As to quaternary structure, homotetramer; which constitutes the calcium-activated potassium channel. In terms of tissue distribution, expressed in both the somites and neural tube of 1 day embryos. Within the nervous system, it is restricted to dorsal parts, and expressed centrally in regions dedicated to processing of sensory information. Six hours later, it is expressed segmentally within the somites. At this time, it is expressed in a primary sensory organ, the trigeminal ganglion. By 2 days, it is also expressed in other primary sensory organs, such as the otic vesicle, and the eye. Within the retina, it is expressed to an internal layer. In the developing otic vesicle, it is abundantly expressed near the apical surface. Isoform 3 is neural-specific, and is only expressed during late stages of neuronal differentiation.

It is found in the cell membrane. The catalysed reaction is K(+)(in) = K(+)(out). With respect to regulation, ethanol and carbon monoxide-bound heme increase channel activation. Heme inhibits channel activation. Functionally, potassium channel activated by both membrane depolarization or increase in cytosolic Ca(2+) that mediates export of K(+). It is also activated by the concentration of cytosolic Mg(2+). Its activation dampens the excitatory events that elevate the cytosolic Ca(2+) concentration and/or depolarize the cell membrane. It therefore contributes to repolarization of the membrane potential. Plays a key role in controlling excitability in a number of systems, such as regulation of the contraction of smooth muscle, the tuning of hair cells in the cochlea, regulation of transmitter release, and innate immunity. In smooth muscles, its activation by high level of Ca(2+), caused by ryanodine receptors in the sarcoplasmic reticulum, regulates the membrane potential. In cochlea cells, its number and kinetic properties partly determine the characteristic frequency of each hair cell and thereby helps to establish a tonotopic map. Highly sensitive to both iberiotoxin (IbTx) and charybdotoxin (CTX). The protein is Calcium-activated potassium channel subunit alpha-1 (kcnma1) of Xenopus laevis (African clawed frog).